Here is a 197-residue protein sequence, read N- to C-terminus: Nucleoid occlusion factor SlmA (197 aa).

Positions Ile-7–Leu-67 constitute an HTH tetR-type domain. Positions Thr-30–Phe-49 form a DNA-binding region, H-T-H motif.

The protein belongs to the nucleoid occlusion factor SlmA family. In terms of assembly, homodimer. Interacts with FtsZ.

The protein resides in the cytoplasm. The protein localises to the nucleoid. In terms of biological role, required for nucleoid occlusion (NO) phenomenon, which prevents Z-ring formation and cell division over the nucleoid. Acts as a DNA-associated cell division inhibitor that binds simultaneously chromosomal DNA and FtsZ, and disrupts the assembly of FtsZ polymers. SlmA-DNA-binding sequences (SBS) are dispersed on non-Ter regions of the chromosome, preventing FtsZ polymerization at these regions. The sequence is that of Nucleoid occlusion factor SlmA from Shewanella amazonensis (strain ATCC BAA-1098 / SB2B).